We begin with the raw amino-acid sequence, 348 residues long: Nicotinate-nucleotide pyrophosphorylase [carboxylating], chloroplastic (348 aa).

A chloroplast-targeting transit peptide spans 1–41; that stretch reads MISVSRFLSPQFYAIPRSFVKMSASATQTAGEVSMGIKPPS. Substrate-binding positions include R139, 170-172, R194, K204, E237, D264, 296-298, and 317-319; these read TRK, SGN, and SGA.

Belongs to the NadC/ModD family.

It localises to the plastid. It is found in the chloroplast. The enzyme catalyses nicotinate beta-D-ribonucleotide + CO2 + diphosphate = quinolinate + 5-phospho-alpha-D-ribose 1-diphosphate + 2 H(+). The protein operates within cofactor biosynthesis; NAD(+) biosynthesis; nicotinate D-ribonucleotide from quinolinate: step 1/1. Involved in the biosynthesis of NAD(+). Catalyzes the conversion of quinolate to nicotinate to nicotinate beta-D-ribonucleotide. The chain is Nicotinate-nucleotide pyrophosphorylase [carboxylating], chloroplastic from Arabidopsis thaliana (Mouse-ear cress).